The following is a 174-amino-acid chain: Ferritin, heavy subunit (174 aa).

The Ferritin-like diiron domain occupies 7–156 (QNFHKDCEAA…DWVTNLRRLG (150 aa)). 5 residues coordinate Fe cation: glutamate 24, glutamate 59, histidine 62, glutamate 104, and glutamine 138.

It belongs to the ferritin family. As to quaternary structure, in liver, forms a heteromer consisting of middle and heavy subunits. The functional molecule forms a roughly spherical shell with a diameter of 12 nm and contains a central cavity into which the insoluble mineral iron core is deposited. As to expression, liver (at protein level).

The enzyme catalyses 4 Fe(2+) + O2 + 4 H(+) = 4 Fe(3+) + 2 H2O. Functionally, stores iron in a soluble, non-toxic, readily available form. Important for iron homeostasis. Has ferroxidase activity. Iron is taken up in the ferrous form and deposited as ferric hydroxides after oxidation. Also plays a role in delivery of iron to cells. Mediates iron uptake in capsule cells of the developing kidney. Delivery to lysosomes is mediated by the cargo receptor NCOA4 for autophagic degradation and release of iron. The polypeptide is Ferritin, heavy subunit (Trematomus newnesi (Dusky notothen)).